We begin with the raw amino-acid sequence, 275 residues long: Large ribosomal subunit protein uL2 (275 aa).

The interval 223 to 275 is disordered; it reads VAMNPVDHPHGGGEGRTSGGRHPVTPWGVPTKGYKTRSNKRTDKYIVRRRNKK.

It belongs to the universal ribosomal protein uL2 family. In terms of assembly, part of the 50S ribosomal subunit. Forms a bridge to the 30S subunit in the 70S ribosome.

Its function is as follows. One of the primary rRNA binding proteins. Required for association of the 30S and 50S subunits to form the 70S ribosome, for tRNA binding and peptide bond formation. It has been suggested to have peptidyltransferase activity; this is somewhat controversial. Makes several contacts with the 16S rRNA in the 70S ribosome. This Shewanella loihica (strain ATCC BAA-1088 / PV-4) protein is Large ribosomal subunit protein uL2.